The following is a 101-amino-acid chain: MIDIGRELQVAINTGKVIIGLRETKKSLLTGAPKLVIIAANAPRWAREDIEYYAKLAGVPIFTFPGSSIELGAAAKRPHKIMALAVVDPGQSEILKLVEHA.

It belongs to the eukaryotic ribosomal protein eL30 family.

The sequence is that of Large ribosomal subunit protein eL30 from Pyrobaculum calidifontis (strain DSM 21063 / JCM 11548 / VA1).